Reading from the N-terminus, the 325-residue chain is Ribosomal RNA small subunit methyltransferase H (325 aa).

S-adenosyl-L-methionine is bound by residues 32–34, Asp-52, Phe-79, Asp-100, and Gln-107; that span reads GGH.

The protein belongs to the methyltransferase superfamily. RsmH family.

The protein localises to the cytoplasm. The enzyme catalyses cytidine(1402) in 16S rRNA + S-adenosyl-L-methionine = N(4)-methylcytidine(1402) in 16S rRNA + S-adenosyl-L-homocysteine + H(+). Its function is as follows. Specifically methylates the N4 position of cytidine in position 1402 (C1402) of 16S rRNA. In Oceanobacillus iheyensis (strain DSM 14371 / CIP 107618 / JCM 11309 / KCTC 3954 / HTE831), this protein is Ribosomal RNA small subunit methyltransferase H.